A 266-amino-acid chain; its full sequence is 5'-nucleotidase SurE (266 aa).

Residues Asp8, Asp9, Ser39, and Asn93 each contribute to the a divalent metal cation site.

The protein belongs to the SurE nucleotidase family. A divalent metal cation is required as a cofactor.

It localises to the cytoplasm. It catalyses the reaction a ribonucleoside 5'-phosphate + H2O = a ribonucleoside + phosphate. Its function is as follows. Nucleotidase that shows phosphatase activity on nucleoside 5'-monophosphates. In Thermococcus gammatolerans (strain DSM 15229 / JCM 11827 / EJ3), this protein is 5'-nucleotidase SurE.